Consider the following 238-residue polypeptide: Ribonuclease 3 (238 aa).

The 128-residue stretch at Val8–Gly135 folds into the RNase III domain. A Mg(2+)-binding site is contributed by Glu48. Asp52 is a catalytic residue. Mg(2+) is bound by residues Asp121 and Glu124. Glu124 is a catalytic residue. The region spanning Asp161–Gly230 is the DRBM domain.

The protein belongs to the ribonuclease III family. In terms of assembly, homodimer. Requires Mg(2+) as cofactor.

The protein localises to the cytoplasm. It catalyses the reaction Endonucleolytic cleavage to 5'-phosphomonoester.. Digests double-stranded RNA. Involved in the processing of primary rRNA transcript to yield the immediate precursors to the large and small rRNAs (23S and 16S). Processes some mRNAs, and tRNAs when they are encoded in the rRNA operon. Processes pre-crRNA and tracrRNA of type II CRISPR loci if present in the organism. The chain is Ribonuclease 3 from Phenylobacterium zucineum (strain HLK1).